Here is a 104-residue protein sequence, read N- to C-terminus: Flagellar hook-basal body complex protein FliE (104 aa).

This sequence belongs to the FliE family.

It localises to the bacterial flagellum basal body. The protein is Flagellar hook-basal body complex protein FliE of Salmonella typhi.